Consider the following 339-residue polypeptide: Glycerol-3-phosphate dehydrogenase [NAD(P)+] (339 aa).

Residues serine 13, tryptophan 14, and lysine 108 each coordinate NADPH. Sn-glycerol 3-phosphate-binding residues include lysine 108, glycine 139, and serine 141. Alanine 143 provides a ligand contact to NADPH. Sn-glycerol 3-phosphate is bound by residues lysine 194, aspartate 247, serine 257, arginine 258, and asparagine 259. Residue lysine 194 is the Proton acceptor of the active site. Arginine 258 lines the NADPH pocket. 2 residues coordinate NADPH: valine 282 and glutamate 284.

It belongs to the NAD-dependent glycerol-3-phosphate dehydrogenase family.

It is found in the cytoplasm. The enzyme catalyses sn-glycerol 3-phosphate + NAD(+) = dihydroxyacetone phosphate + NADH + H(+). It catalyses the reaction sn-glycerol 3-phosphate + NADP(+) = dihydroxyacetone phosphate + NADPH + H(+). It functions in the pathway membrane lipid metabolism; glycerophospholipid metabolism. In terms of biological role, catalyzes the reduction of the glycolytic intermediate dihydroxyacetone phosphate (DHAP) to sn-glycerol 3-phosphate (G3P), the key precursor for phospholipid synthesis. The sequence is that of Glycerol-3-phosphate dehydrogenase [NAD(P)+] from Streptococcus equi subsp. zooepidemicus (strain H70).